Consider the following 1630-residue polypeptide: Histone transcription regulator 3 homolog (1630 aa).

The stretch at 8-42 is one TPR 1 repeat; it reads NAASEDLDKEKRTLEIRIEEAVQIYQNALSAQKQG. The segment at 325 to 347 is disordered; that stretch reads KDIVPPPSDNLPKPQLLKRPIDD. The stretch at 1230–1263 is one TPR 2 repeat; it reads WRALYMLGKACRKCGDMENALVHFEAAAALAPTK.

This sequence belongs to the HIR3 family. As to quaternary structure, interacts with hip1 and slm9.

The protein localises to the nucleus. In terms of biological role, has a role in a nucleosome assembly pathway that is required for the integrity of heterochromatin and proper chromosome segregation. Required for transcriptional silencing in the outer repeat (otr) region of centromeric repeats and the Tf2 long terminal repeat retrotransposons. The protein is Histone transcription regulator 3 homolog (hip3) of Schizosaccharomyces pombe (strain 972 / ATCC 24843) (Fission yeast).